The chain runs to 81 residues: Cell division protein ZapB (81 aa).

Residues 5–81 (LEVFEKLESK…QALLGRMEEV (77 aa)) are a coiled coil. Residues 43–64 (VHSAQNGREELERENQQLREQQ) are disordered. Residues 49 to 59 (GREELERENQQ) show a composition bias toward basic and acidic residues.

Belongs to the ZapB family. Homodimer. The ends of the coiled-coil dimer bind to each other, forming polymers. Interacts with FtsZ.

The protein resides in the cytoplasm. In terms of biological role, non-essential, abundant cell division factor that is required for proper Z-ring formation. It is recruited early to the divisome by direct interaction with FtsZ, stimulating Z-ring assembly and thereby promoting cell division earlier in the cell cycle. Its recruitment to the Z-ring requires functional FtsA or ZipA. The chain is Cell division protein ZapB from Enterobacter sp. (strain 638).